A 223-amino-acid chain; its full sequence is Uracil-DNA glycosylase (223 aa).

Asp61 acts as the Proton acceptor in catalysis.

It belongs to the uracil-DNA glycosylase (UDG) superfamily. UNG family.

It localises to the cytoplasm. The catalysed reaction is Hydrolyzes single-stranded DNA or mismatched double-stranded DNA and polynucleotides, releasing free uracil.. Its function is as follows. Excises uracil residues from the DNA which can arise as a result of misincorporation of dUMP residues by DNA polymerase or due to deamination of cytosine. The chain is Uracil-DNA glycosylase from Tolumonas auensis (strain DSM 9187 / NBRC 110442 / TA 4).